A 784-amino-acid chain; its full sequence is Endonuclease MutS2 (784 aa).

Position 335–342 (335–342 (GPNTGGKT)) interacts with ATP. Residues 527 to 546 (ERSKKQAEEDEARAHSAREE) are disordered. The Smr domain maps to 709-784 (LDLRGERYED…GTGVTVVELK (76 aa)).

It belongs to the DNA mismatch repair MutS family. MutS2 subfamily. Homodimer. Binds to stalled ribosomes, contacting rRNA.

Endonuclease that is involved in the suppression of homologous recombination and thus may have a key role in the control of bacterial genetic diversity. In terms of biological role, acts as a ribosome collision sensor, splitting the ribosome into its 2 subunits. Detects stalled/collided 70S ribosomes which it binds and splits by an ATP-hydrolysis driven conformational change. Acts upstream of the ribosome quality control system (RQC), a ribosome-associated complex that mediates the extraction of incompletely synthesized nascent chains from stalled ribosomes and their subsequent degradation. Probably generates substrates for RQC. The polypeptide is Endonuclease MutS2 (Geobacillus thermodenitrificans (strain NG80-2)).